A 266-amino-acid polypeptide reads, in one-letter code: HTH-type transcriptional regulator MurR (266 aa).

The HTH rpiR-type domain occupies 1 to 77 (MLYLTKIRNA…MALIGEYSAS (77 aa)). Positions 37-56 (SRQMAKQLGISQSSIVKFAQ) form a DNA-binding region, H-T-H motif. The SIS domain occupies 128 to 266 (IIEVISKAPF…LLFVGLVQHQ (139 aa)).

In terms of assembly, homotetramer.

Its pathway is amino-sugar metabolism; N-acetylmuramate degradation [regulation]. Represses the expression of the murPQ operon involved in the uptake and degradation of N-acetylmuramic acid (MurNAc). Binds to two adjacent inverted repeats within the operator region. MurNAc 6-phosphate, the substrate of MurQ, is the specific inducer that weakens binding of MurR to the operator. This is HTH-type transcriptional regulator MurR from Shigella flexneri serotype 5b (strain 8401).